The chain runs to 353 residues: Photosystem II protein D1 (353 aa).

T2 bears the N-acetylthreonine mark. Phosphothreonine is present on T2. The next 3 membrane-spanning stretches (helical) occupy residues 29 to 46 (YIGWFGVLMIPTLLTATS), 118 to 133 (HFFIGICSYMGREWEL), and 142 to 156 (WIAVAYSAPVAAATA). H118 provides a ligand contact to chlorophyll a. Y126 provides a ligand contact to pheophytin a. Residues D170 and E189 each coordinate [CaMn4O5] cluster. Residues 197–218 (FHMLGVAGVFGGSLFSAMHGSL) traverse the membrane as a helical segment. H198 is a binding site for chlorophyll a. Residues H215 and 264 to 265 (SF) each bind a quinone. H215 is a Fe cation binding site. Position 272 (H272) interacts with Fe cation. The helical transmembrane segment at 274–288 (FLAIWPVMGIWFTAL) threads the bilayer. Residues H332, E333, D342, and A344 each coordinate [CaMn4O5] cluster. Residues 345–353 (SVEAPSINA) constitute a propeptide that is removed on maturation.

Belongs to the reaction center PufL/M/PsbA/D family. As to quaternary structure, PSII is composed of 1 copy each of membrane proteins PsbA, PsbB, PsbC, PsbD, PsbE, PsbF, PsbH, PsbI, PsbJ, PsbK, PsbL, PsbM, PsbT, PsbX, PsbY, PsbZ, Psb30/Ycf12, at least 3 peripheral proteins of the oxygen-evolving complex and a large number of cofactors. It forms dimeric complexes. The cofactor is The D1/D2 heterodimer binds P680, chlorophylls that are the primary electron donor of PSII, and subsequent electron acceptors. It shares a non-heme iron and each subunit binds pheophytin, quinone, additional chlorophylls, carotenoids and lipids. D1 provides most of the ligands for the Mn4-Ca-O5 cluster of the oxygen-evolving complex (OEC). There is also a Cl(-1) ion associated with D1 and D2, which is required for oxygen evolution. The PSII complex binds additional chlorophylls, carotenoids and specific lipids.. In terms of processing, tyr-161 forms a radical intermediate that is referred to as redox-active TyrZ, YZ or Y-Z. C-terminally processed by CTPA; processing is essential to allow assembly of the oxygen-evolving complex and thus photosynthetic growth.

Its subcellular location is the plastid. The protein resides in the chloroplast thylakoid membrane. The catalysed reaction is 2 a plastoquinone + 4 hnu + 2 H2O = 2 a plastoquinol + O2. Functionally, photosystem II (PSII) is a light-driven water:plastoquinone oxidoreductase that uses light energy to abstract electrons from H(2)O, generating O(2) and a proton gradient subsequently used for ATP formation. It consists of a core antenna complex that captures photons, and an electron transfer chain that converts photonic excitation into a charge separation. The D1/D2 (PsbA/PsbD) reaction center heterodimer binds P680, the primary electron donor of PSII as well as several subsequent electron acceptors. This is Photosystem II protein D1 from Ostreococcus tauri.